The chain runs to 214 residues: Ribonuclease HII (214 aa).

In terms of domain architecture, RNase H type-2 spans 26-214 (EIVCGVDEAG…PVREAFDLIR (189 aa)). D32, E33, and D124 together coordinate a divalent metal cation.

Belongs to the RNase HII family. Requires Mn(2+) as cofactor. Mg(2+) serves as cofactor.

It localises to the cytoplasm. It catalyses the reaction Endonucleolytic cleavage to 5'-phosphomonoester.. Endonuclease that specifically degrades the RNA of RNA-DNA hybrids. In Burkholderia mallei (strain NCTC 10247), this protein is Ribonuclease HII.